The sequence spans 438 residues: Aspartate aminotransferase, cytoplasmic (438 aa).

L-aspartate-binding residues include G73, W167, and N220. K284 carries the post-translational modification N6-(pyridoxal phosphate)lysine. R412 provides a ligand contact to L-aspartate.

It belongs to the class-I pyridoxal-phosphate-dependent aminotransferase family. In terms of assembly, homodimer. The cofactor is pyridoxal 5'-phosphate.

It is found in the cytoplasm. The enzyme catalyses L-aspartate + 2-oxoglutarate = oxaloacetate + L-glutamate. Plays a key role in amino acid metabolism. This is Aspartate aminotransferase, cytoplasmic (aatB) from Dictyostelium discoideum (Social amoeba).